A 177-amino-acid chain; its full sequence is Large ribosomal subunit protein uL6 (177 aa).

The protein belongs to the universal ribosomal protein uL6 family. As to quaternary structure, part of the 50S ribosomal subunit.

Functionally, this protein binds to the 23S rRNA, and is important in its secondary structure. It is located near the subunit interface in the base of the L7/L12 stalk, and near the tRNA binding site of the peptidyltransferase center. The sequence is that of Large ribosomal subunit protein uL6 from Mannheimia succiniciproducens (strain KCTC 0769BP / MBEL55E).